The following is a 216-amino-acid chain: Imidazole glycerol phosphate synthase subunit HisH (216 aa).

Positions 2-216 constitute a Glutamine amidotransferase type-1 domain; the sequence is RVAIIDYGSG…LIANFLKWKP (215 aa). Cysteine 88 acts as the Nucleophile in catalysis. Catalysis depends on residues histidine 196 and glutamate 198.

Heterodimer of HisH and HisF.

The protein localises to the cytoplasm. It carries out the reaction 5-[(5-phospho-1-deoxy-D-ribulos-1-ylimino)methylamino]-1-(5-phospho-beta-D-ribosyl)imidazole-4-carboxamide + L-glutamine = D-erythro-1-(imidazol-4-yl)glycerol 3-phosphate + 5-amino-1-(5-phospho-beta-D-ribosyl)imidazole-4-carboxamide + L-glutamate + H(+). The enzyme catalyses L-glutamine + H2O = L-glutamate + NH4(+). It participates in amino-acid biosynthesis; L-histidine biosynthesis; L-histidine from 5-phospho-alpha-D-ribose 1-diphosphate: step 5/9. Functionally, IGPS catalyzes the conversion of PRFAR and glutamine to IGP, AICAR and glutamate. The HisH subunit catalyzes the hydrolysis of glutamine to glutamate and ammonia as part of the synthesis of IGP and AICAR. The resulting ammonia molecule is channeled to the active site of HisF. The protein is Imidazole glycerol phosphate synthase subunit HisH of Brucella abortus biovar 1 (strain 9-941).